A 130-amino-acid polypeptide reads, in one-letter code: Small ribosomal subunit protein uS8 (130 aa).

Belongs to the universal ribosomal protein uS8 family. In terms of assembly, part of the 30S ribosomal subunit. Contacts proteins S5 and S12.

Its function is as follows. One of the primary rRNA binding proteins, it binds directly to 16S rRNA central domain where it helps coordinate assembly of the platform of the 30S subunit. The chain is Small ribosomal subunit protein uS8 from Psychromonas ingrahamii (strain DSM 17664 / CCUG 51855 / 37).